A 380-amino-acid polypeptide reads, in one-letter code: Cytochrome b (380 aa).

4 helical membrane passes run 34–54 (FGSL…LLAM), 78–99 (WLIR…YLHI), 114–134 (WNTG…GYVL), and 179–199 (FFAL…IHLT). Positions 84 and 98 each coordinate heme b. The heme b site is built by His-183 and His-197. His-202 lines the a ubiquinone pocket. The next 4 helical transmembrane spans lie at 227-247 (LKDI…ALFS), 289-309 (LGGV…PFLH), 321-341 (LSQL…WVGS), and 348-368 (FIII…ILFP).

The protein belongs to the cytochrome b family. As to quaternary structure, the cytochrome bc1 complex contains 11 subunits: 3 respiratory subunits (MT-CYB, CYC1 and UQCRFS1), 2 core proteins (UQCRC1 and UQCRC2) and 6 low-molecular weight proteins (UQCRH/QCR6, UQCRB/QCR7, UQCRQ/QCR8, UQCR10/QCR9, UQCR11/QCR10 and a cleavage product of UQCRFS1). This cytochrome bc1 complex then forms a dimer. Heme b serves as cofactor.

Its subcellular location is the mitochondrion inner membrane. Its function is as follows. Component of the ubiquinol-cytochrome c reductase complex (complex III or cytochrome b-c1 complex) that is part of the mitochondrial respiratory chain. The b-c1 complex mediates electron transfer from ubiquinol to cytochrome c. Contributes to the generation of a proton gradient across the mitochondrial membrane that is then used for ATP synthesis. The polypeptide is Cytochrome b (MT-CYB) (Pterodroma hypoleuca (Bonin petrel)).